The chain runs to 150 residues: Endoribonuclease YbeY (150 aa).

Zn(2+) is bound by residues His-112, His-116, and His-122.

Belongs to the endoribonuclease YbeY family. Zn(2+) is required as a cofactor.

Its subcellular location is the cytoplasm. In terms of biological role, single strand-specific metallo-endoribonuclease involved in late-stage 70S ribosome quality control and in maturation of the 3' terminus of the 16S rRNA. This chain is Endoribonuclease YbeY, found in Geobacter metallireducens (strain ATCC 53774 / DSM 7210 / GS-15).